The primary structure comprises 64 residues: uncharacterized protein (64 aa).

This is an uncharacterized protein from Archaeoglobus fulgidus (strain ATCC 49558 / DSM 4304 / JCM 9628 / NBRC 100126 / VC-16).